A 67-amino-acid polypeptide reads, in one-letter code: Ceratotoxin-C (67 aa).

The signal sequence occupies residues 1 to 23 (MANIKAVFLICIVAFIAFHCVVA). Positions 24–35 (EPTAEDSVVVKR) are excised as a propeptide.

As to quaternary structure, homomer of four to six subunits.

Its subcellular location is the secreted. Female-specific peptides with potent activity against Gram-positive and Gram-negative bacteria. They have as well hemolytic activity. The polypeptide is Ceratotoxin-C (CTXC1) (Ceratitis capitata (Mediterranean fruit fly)).